Here is an 86-residue protein sequence, read N- to C-terminus: Mitochondrial import inner membrane translocase subunit Tim10 (86 aa).

Positions 29 to 54 (CQAKCIATAFRESELTKGEAVCLDRC) match the Twin CX3C motif motif. Cystine bridges form between Cys-29-Cys-54 and Cys-33-Cys-50.

It belongs to the small Tim family. Heterohexamer; composed of 3 copies of tim-9/tin-9.1 and 3 copies of tim-10/tin-10, named soluble 70 kDa complex. The complex associates with the tim-22 component of the TIM22 complex. Interacts with multi-pass transmembrane proteins in transit.

The protein localises to the mitochondrion inner membrane. Functionally, mitochondrial intermembrane chaperone that participates in the import and insertion of multi-pass transmembrane proteins into the mitochondrial inner membrane. May also be required for the transfer of beta-barrel precursors from the TOM complex to the sorting and assembly machinery (SAM complex) of the outer membrane. Acts as a chaperone-like protein that protects the hydrophobic precursors from aggregation and guide them through the mitochondrial intermembrane space. The sequence is that of Mitochondrial import inner membrane translocase subunit Tim10 (tin-10) from Caenorhabditis elegans.